The following is a 210-amino-acid chain: N-(5'-phosphoribosyl)anthranilate isomerase (210 aa).

It belongs to the TrpF family.

The catalysed reaction is N-(5-phospho-beta-D-ribosyl)anthranilate = 1-(2-carboxyphenylamino)-1-deoxy-D-ribulose 5-phosphate. The protein operates within amino-acid biosynthesis; L-tryptophan biosynthesis; L-tryptophan from chorismate: step 3/5. This Methanococcus aeolicus (strain ATCC BAA-1280 / DSM 17508 / OCM 812 / Nankai-3) protein is N-(5'-phosphoribosyl)anthranilate isomerase.